A 231-amino-acid polypeptide reads, in one-letter code: MAKLTKRQKAIASKIEAGKSYNFVDAAALLTELSTVKFSESVDVAVNLGVDPRKSDQVVRSATVLPHGTGKTVRVAVFTQGPAAEAALAAGADRVGMDDLAAEMKAGDLNYDVVIASPDAMRVVGQLGQVLGPRGLMPNPKVGTVTPDVANAVKNAKAGQVRYRTDKNGIIHTSVGKVGFDAVKLKENVEALIADLKRIKPASSKGIYVKRITLSTTMGPGLVIDQGSLEA.

It belongs to the universal ribosomal protein uL1 family. Part of the 50S ribosomal subunit.

Functionally, binds directly to 23S rRNA. The L1 stalk is quite mobile in the ribosome, and is involved in E site tRNA release. In terms of biological role, protein L1 is also a translational repressor protein, it controls the translation of the L11 operon by binding to its mRNA. The chain is Large ribosomal subunit protein uL1 from Pseudomonas savastanoi pv. phaseolicola (strain 1448A / Race 6) (Pseudomonas syringae pv. phaseolicola (strain 1448A / Race 6)).